Reading from the N-terminus, the 2041-residue chain is MSGGRQRTLPEAWRRAAGPALQAGRDADGNDDDDDELLAAAAAELDPDPNPNVDPNPGPGPEAAAGGFCAAAGALWIYPTNRPERPYQLRMARAALFANTLLCLPTGLGKTFVAAVVMYNFYRWFPSGKVLFLAPTKALVAQQMEACAQLMGIPGRDMAEMTGGTQALSRRELWASRRVFFLTPQIMVNDLSRGTCPAVEVKCLVVDEAHKALGNHAYCQVVKELSRYTTQFRVLALTATPGSDTKAVQQVVSNLLIAQIELCSEDSPEIQPYSHERQVEKIVVPLGEELGGIQRAYIHVLETFAGRLIKLGVLARRDVPSLTKYQIILARDQYRKNPSPQNVGMQPGIIEGDFALCISLYHGYELLQQMGVRSLFIYLCGIMDGSKGLTRTKNELGRNEDFMRLYQQLTDMFSDTCQTSANGNLHKSRTVSENKKEFIYSHPKLKKLEEIVIEHFKSRKMGCSDQTTSGGTCVDTRVMIFSSFRDSVQEIAEMLSRFSPVVRVMTFVGHSTGKSTKGFTQKEQLEVVKRFREGGYNTLVSTCVGEEGLDIGEVDLIICFDAQKSPIRLVQRMGRTGRQRQGRVVVILAEGREERTYNQSQSNRRSIQKAISGNKMLHFYQHSPRMIPEGINPELHRMFITAEKYKPNDSGRLPKGRPSSLHHKSALFSCVTDPKEMHCHENWSLSPEEFEIWDRLYRLKENDGVKEPILPHTRFETLENLDKTSKPEEEAAHKLSLSEWSIWQSRPFPTSMVDHSDRCYHFISVMELIEVMRQEQGDCSYELELQPHLRIEDIHVRRNKGHLSTTSSAFAQKTHSSKRDMARTKRPFVPDVNDNEREFFSIFKTTNTKTPRTAPGLDLEEPELPTDTNGSEPCSARRLTLVASTDQGSPKEEEIEKVTFDLNEFNDLCDDGESTVAHESAAVKDLRLLDKHCSSVGLNHTDLGYSSFTAEKSPASSDLFYLPESHVDSFVLVSSSAELAGLEGAFSCVKGLLAHSPPPVSKLEGIEELLRHEETLCPLPKVSCRSYSGQLPHGDFPSSLAVDQSLLPAESPELEVTIGLSAAVNTCVSKPASTPTAAGGAEERPPGGGSFHSLLGKEGFTANHTDNPPNKHFVQGDEEDSEMKRDVTIDGEKSIHLFEDEHTYKVNDEMPSVDVEPLLRLGSGGHTARPSAGPASQQPPSGDSPRGDTACGEGAARGEMAPGGAWGRGSAAEQALHNSELCDYSQELFSVNFDLGFSIEECEEEIFEGDTDAMNTPKLNSASRSRADVQLTANRKSLNDGCRVQTPPKWDCKGLKGRNISTPLPLQSGHVRDTAVPGGTAGGRTGRGSPGASPPSPATPTGRRVSSAEATRRIRKKVFSTVREETPEVCPTDKVNPNSQRNSFGSSASDALHTTGGRTENLEGTNLHTSRVFPAEGTSSESEEEIVFQRKNRRNNVLRSPDVGSDSDFGSPVCAVRKRRHPLTVSDVSSDDGVDFHKNPNRGTRGCSAAGSKAQLRGVKRQKVRSKVTCKNAARQFLDEEAELSQQDESCVSSDETEDTDKELSSSLAQFLNDDAEVTQVLNDSEMRGVYLKSVRSPALGSRYRMVHREFNSTEIFSQIPEQDEAYAEDSFCVAEGDEETCNKSESSEEEEVCVNFDLLNNESFGGGGGRYLTRRRKKLHGANMEQNCSAPVQKKPSRIIVLSDSSGEETNVSNEKGTAAHCSRAGRENAELLTSMPSVSSVPHKKSAGDVSAHQSAESKSGMLLGLKASVSEVLDFHPGPRSGSGKEALQAAAQHLQLESSVKNSAGNAPGATKASPALLDGDTALCVLVDSREISSGADVISSLKAVHGLKVQVCSLGSGDYVVSNRMAVERKFQSELLSSVNRTKVTQRLQRLQGMFERVCVIVEKDRTRPGETSRFSQRTQHYDATLAALLQAGIRVLFSSCQEETAVLLKELALLEQRKNAAICVPTEVEGHKQEMLNFYLSLPNISYLAALNMCHHFSSVRTMVNSSPSDIAAGARVSLQRAEETYRYLRYGFDTQMLPESLCAKGKSNTATRS.

The disordered stretch occupies residues 1–64; it reads MSGGRQRTLP…PNPGPGPEAA (64 aa). The segment covering 48-60 has biased composition (pro residues); it reads DPNPNVDPNPGPG. The Helicase ATP-binding domain occupies 91–259; sequence MARAALFANT…QVVSNLLIAQ (169 aa). 104-111 provides a ligand contact to ATP; that stretch reads LPTGLGKT. Positions 207-210 match the DEAH box motif; that stretch reads DEAH. The Helicase C-terminal domain occupies 447–631; that stretch reads KLEEIVIEHF…HSPRMIPEGI (185 aa). Residues 802–814 are compositionally biased toward polar residues; the sequence is HLSTTSSAFAQKT. Disordered regions lie at residues 802–822, 848–874, 1070–1124, 1158–1208, 1301–1403, 1465–1491, and 1685–1740; these read HLST…RDMA, TKTP…SEPC, KPAS…SEMK, LLRL…AWGR, STPL…ENLE, VSDV…SAAG, and DSSG…SAES. The span at 1170 to 1181 shows a compositional bias: low complexity; the sequence is PSAGPASQQPPS. Over residues 1319–1329 the composition is skewed to gly residues; that stretch reads GTAGGRTGRGS. Polar residues predominate over residues 1375 to 1389; that stretch reads VNPNSQRNSFGSSAS. Polar residues predominate over residues 1685 to 1697; that stretch reads DSSGEETNVSNEK.

It belongs to the DEAD box helicase family. DEAH subfamily. FANCM sub-subfamily. As to quaternary structure, component of the Fanconi anemia (FA) core complex. The FA core complex associates with Bloom syndrome (BLM) complex. This supercomplex between FA and BLM complexes has been called BRAFT. Phosphorylated; hyperphosphorylated in response to genotoxic stress.

The protein resides in the nucleus. The catalysed reaction is ATP + H2O = ADP + phosphate + H(+). Its function is as follows. DNA-dependent ATPase component of the Fanconi anemia (FA) core complex. Required for the normal activation of the FA pathway, leading to monoubiquitination of the FANCI-FANCD2 complex in response to DNA damage, cellular resistance to DNA cross-linking drugs, and prevention of chromosomal breakage. In complex with CENPS and CENPX, binds double-stranded DNA (dsDNA), fork-structured DNA (fsDNA) and Holliday junction substrates. Its ATP-dependent DNA branch migration activity can process branched DNA structures such as a movable replication fork. This activity is strongly stimulated in the presence of CENPS and CENPX. In complex with FAAP24, efficiently binds to single-strand DNA (ssDNA), splayed-arm DNA, and 3'-flap substrates. In vitro, on its own, strongly binds ssDNA oligomers and weakly fsDNA, but does not bind to dsDNA. The sequence is that of Fanconi anemia group M protein (FANCM) from Gallus gallus (Chicken).